The sequence spans 1295 residues: Unconventional myosin-VI (1295 aa).

Residues 2–53 (EDGRPVWAPHPTEGFQMGNIVDIGPDSLTIEPLGQKGKTFLALINQVFPAEE) enclose the Myosin N-terminal SH3-like domain. One can recognise a Myosin motor domain in the interval 57–771 (KDVEDNCSLM…KFAEFDQIMK (715 aa)). 151–158 (GESGAGKT) contributes to the ATP binding site. The residue at position 267 (Ser-267) is a Phosphoserine. Positions 273 to 317 (YLNRGCTRYFANKETDKQILQNRKTPEHLKAGSLKDPLLDDHGDF) are responsible for slow ATPase activity. Thr-405 carries the post-translational modification Phosphothreonine. A Phosphoserine modification is found at Ser-604. Residues 651 to 673 (LNLLLDKLRSTGASFIRCIKPNL) are actin-binding. Positions 782–810 (KRVNHWLICSRWKKVQWCSLSVIKLKNKI) are required for binding calmodulin. Residues 813–842 (RAEACIKMQKTIRMWLCKRRHKPRIDGLVK) enclose the IQ domain. A three-helix bundle region spans residues 835 to 916 (PRIDGLVKVG…EVLLSALQKK (82 aa)). The segment at 917-984 (KQQEEEAERL…EDDEKRIQAE (68 aa)) is SAH. The disordered stretch occupies residues 934-955 (EKERKRREEDEQRRRKEEEERR). The tract at residues 1061-1286 (KEMSEILSRG…ESRQARPTYA (226 aa)) is interaction with TAX1BP1 and CALCOCO2/NDP52. An interaction with OPTN region spans residues 1117 to 1119 (RRL). The residue at position 1156 (Ser-1156) is a Phosphoserine. Residues 1158–1286 (QQNPAAQLPA…ESRQARPTYA (129 aa)) are interaction with TOM1.

It belongs to the TRAFAC class myosin-kinesin ATPase superfamily. Myosin family. In terms of assembly, homodimer; dimerization seems to implicate the unfolding of the three-helix bundle region creating an additional calmodulin binding site, and cargo binding. Able to function as a monomer under specific conditions in vitro. Forms a complex with CFTR and DAB2 in the apical membrane of epithelial cells. Component of the DISP/DOCK7-induced septin displacement complex, at least composed of DOCK7, LRCH3 and MYO6. Binding to calmodulin through a unique insert, not found in other myosins, located in the neck region between the motor domain and the IQ domain appears to contribute to the directionality reversal. This interaction occurs only if the C-terminal lobe of calmodulin is occupied by calcium. Interaction with F-actin/ACTN1 occurs only at the apical brush border domain of the proximal tubule cells. Interacts with DAB2. In vitro, the C-terminal globular tail binds a C-terminal region of DAB2. Interacts with CFTR. Interacts with CABP5. Interacts (via residues 1158-1286) with TOM1 (via residues 392-463). Interacts (via residues 1060-1285) with OPTN. Interacts (via residues 1060-1285) with TAX1BP1 and CALCOCO2/NDP52. Interacts with TOM1L2. Interacts with CLIC5; may work together in a complex which also includes RDX and MYO6 to stabilize linkages between the plasma membrane and subjacent actin cytoskeleton at the base of stereocilia. Post-translationally, phosphorylation in the motor domain, induced by EGF, results in translocation of MYO6 from the cell surface to membrane ruffles and affects F-actin dynamics. Phosphorylated in vitro by p21-activated kinase (PAK). Expressed in the retina (at protein level).

It is found in the golgi apparatus. The protein localises to the trans-Golgi network membrane. It localises to the nucleus. Its subcellular location is the cytoplasm. The protein resides in the perinuclear region. It is found in the membrane. The protein localises to the clathrin-coated pit. It localises to the cytoplasmic vesicle. Its subcellular location is the clathrin-coated vesicle. The protein resides in the cell projection. It is found in the filopodium. The protein localises to the ruffle membrane. It localises to the microvillus. Its subcellular location is the cytosol. In terms of biological role, myosins are actin-based motor molecules with ATPase activity. Unconventional myosins serve in intracellular movements. Myosin 6 is a reverse-direction motor protein that moves towards the minus-end of actin filaments. Has slow rate of actin-activated ADP release due to weak ATP binding. Functions in a variety of intracellular processes such as vesicular membrane trafficking and cell migration. Required for the structural integrity of the Golgi apparatus via the p53-dependent pro-survival pathway. Appears to be involved in a very early step of clathrin-mediated endocytosis in polarized epithelial cells. Together with TOM1, mediates delivery of endocytic cargo to autophagosomes thereby promoting autophagosome maturation and driving fusion with lysosomes. Links TOM1 with autophagy receptors, such as TAX1BP1; CALCOCO2/NDP52 and OPTN. May act as a regulator of F-actin dynamics. As part of the DISP complex, may regulate the association of septins with actin and thereby regulate the actin cytoskeleton. May play a role in transporting DAB2 from the plasma membrane to specific cellular targets. May play a role in the extension and network organization of neurites. Required for structural integrity of inner ear hair cells. Required for the correct localization of CLIC5 and RDX at the stereocilium base. Modulates RNA polymerase II-dependent transcription. This is Unconventional myosin-VI from Bos taurus (Bovine).